Here is a 194-residue protein sequence, read N- to C-terminus: MAGRSSASSALLYGPRGFDLPFSRSMRLERETPSVSATAFIANRPSATRSAAISVFLSPLWKGLRGGFRPPSSCDRACAPTPGRDPPVSSLPNSRQPARQNPRLQHLPRSRACATDKANWAPRMTASGRRYRLAGFKTLLNDCQLLLGCPPPARDITRQQFNVSIVVRHKPVLKPVLEPFCLCRLSGRNGGQFI.

The disordered stretch occupies residues Ser73–Arg103. Over residues Ser90–Arg103 the composition is skewed to polar residues.

The sequence is that of Insertion element IS136 uncharacterized 21.2 kDa protein from Agrobacterium tumefaciens (strain T37).